A 610-amino-acid chain; its full sequence is Elongation factor 4 (610 aa).

Residues 14–196 (NRIRNFSIIA…ALVANIPPPK (183 aa)) enclose the tr-type G domain. GTP is bound by residues 26–31 (DHGKST) and 143–146 (NKID).

It belongs to the TRAFAC class translation factor GTPase superfamily. Classic translation factor GTPase family. LepA subfamily.

The protein localises to the cell inner membrane. It carries out the reaction GTP + H2O = GDP + phosphate + H(+). Its function is as follows. Required for accurate and efficient protein synthesis under certain stress conditions. May act as a fidelity factor of the translation reaction, by catalyzing a one-codon backward translocation of tRNAs on improperly translocated ribosomes. Back-translocation proceeds from a post-translocation (POST) complex to a pre-translocation (PRE) complex, thus giving elongation factor G a second chance to translocate the tRNAs correctly. Binds to ribosomes in a GTP-dependent manner. The chain is Elongation factor 4 from Legionella pneumophila (strain Lens).